The chain runs to 86 residues: U2-sicaritoxin-Li1a (86 aa).

The signal sequence occupies residues 1–20 (MTFKLFVVVTLVLAIYVATA). Residues 21-33 (EEAMKDDSEPAER) constitute a propeptide that is removed on maturation. Disulfide bonds link Cys35–Cys53, Cys42–Cys62, Cys52–Cys71, and Cys64–Cys69.

It belongs to the neurotoxin 39 family. In terms of tissue distribution, expressed by the venom gland.

Its subcellular location is the secreted. Functionally, toxin active against S.frugiperda larvae. May act on sodium channels (Nav). The polypeptide is U2-sicaritoxin-Li1a (Loxosceles intermedia (Brown spider)).